Reading from the N-terminus, the 497-residue chain is L-asparagine permease (497 aa).

Helical transmembrane passes span 34 to 54 (QVQM…GAGA), 58 to 78 (MAGP…FFIL), 109 to 129 (VAGW…ITAV), 146 to 166 (VFAL…VKWF), 171 to 191 (FWFA…GTIF), 219 to 239 (LLPA…IELV), 264 to 284 (IGLF…WNAY), 298 to 318 (LGVP…ALSS), 353 to 373 (YAGI…NYLV), 378 to 398 (FEIV…FIMV), 422 to 442 (APFT…LMAF), and 448 to 468 (TYTI…WFGV).

Belongs to the amino acid-polyamine-organocation (APC) superfamily. Amino acid transporter (AAT) (TC 2.A.3.1) family.

The protein localises to the cell inner membrane. This is L-asparagine permease (ansP) from Salmonella typhimurium (strain LT2 / SGSC1412 / ATCC 700720).